The chain runs to 42 residues: Photosystem I reaction center subunit IX (42 aa).

The chain crosses the membrane as a helical span at residues 7-27 (YLSVAPVLSTLWFGALAGLLI).

Belongs to the PsaJ family.

It localises to the plastid. The protein resides in the chloroplast thylakoid membrane. Functionally, may help in the organization of the PsaE and PsaF subunits. This chain is Photosystem I reaction center subunit IX, found in Guizotia abyssinica (Niger).